The following is a 511-amino-acid chain: Apolipoprotein N-acyltransferase (511 aa).

6 consecutive transmembrane segments (helical) span residues 24 to 44 (LALAPFVYWPLAILSIALLYL), 58 to 78 (GWWYGFGAFGAGTSWIYVSIH), 90 to 110 (FLMLGFTAGVAFFFALPAWLW), 125 to 145 (LAFAALWLALELFRSWFLTGF), 163 to 183 (VPVGGVWLSSFVIALSAALLV), and 192 to 212 (GASLLLGLVLLLGPWAAGLYL). Residues 230-470 (IQGNIAQELK…QGILRGEVIP (241 aa)) form the CN hydrolase domain. E269 serves as the catalytic Proton acceptor. K330 is a catalytic residue. C382 serves as the catalytic Nucleophile. A helical membrane pass occupies residues 482-502 (VWPLAGLAGVLLLWALLGRQL).

The protein belongs to the CN hydrolase family. Apolipoprotein N-acyltransferase subfamily.

The protein resides in the cell inner membrane. It carries out the reaction N-terminal S-1,2-diacyl-sn-glyceryl-L-cysteinyl-[lipoprotein] + a glycerophospholipid = N-acyl-S-1,2-diacyl-sn-glyceryl-L-cysteinyl-[lipoprotein] + a 2-acyl-sn-glycero-3-phospholipid + H(+). It participates in protein modification; lipoprotein biosynthesis (N-acyl transfer). In terms of biological role, catalyzes the phospholipid dependent N-acylation of the N-terminal cysteine of apolipoprotein, the last step in lipoprotein maturation. The sequence is that of Apolipoprotein N-acyltransferase from Pseudomonas aeruginosa (strain UCBPP-PA14).